Here is a 392-residue protein sequence, read N- to C-terminus: Formate-dependent phosphoribosylglycinamide formyltransferase (392 aa).

N(1)-(5-phospho-beta-D-ribosyl)glycinamide-binding positions include 15–16 (EL) and Glu-75. ATP contacts are provided by residues Arg-107, Lys-148, 153 to 158 (SSGKGQ), 188 to 191 (EEFL), and Glu-196. One can recognise an ATP-grasp domain in the interval 112–302 (DLASEELALL…EFELHLRAVL (191 aa)). Residues Glu-261 and Glu-273 each coordinate Mg(2+). N(1)-(5-phospho-beta-D-ribosyl)glycinamide-binding positions include Asp-280, Lys-350, and 357 to 358 (RR).

This sequence belongs to the PurK/PurT family. In terms of assembly, homodimer.

It catalyses the reaction N(1)-(5-phospho-beta-D-ribosyl)glycinamide + formate + ATP = N(2)-formyl-N(1)-(5-phospho-beta-D-ribosyl)glycinamide + ADP + phosphate + H(+). It functions in the pathway purine metabolism; IMP biosynthesis via de novo pathway; N(2)-formyl-N(1)-(5-phospho-D-ribosyl)glycinamide from N(1)-(5-phospho-D-ribosyl)glycinamide (formate route): step 1/1. Involved in the de novo purine biosynthesis. Catalyzes the transfer of formate to 5-phospho-ribosyl-glycinamide (GAR), producing 5-phospho-ribosyl-N-formylglycinamide (FGAR). Formate is provided by PurU via hydrolysis of 10-formyl-tetrahydrofolate. The chain is Formate-dependent phosphoribosylglycinamide formyltransferase from Prochlorococcus marinus (strain MIT 9303).